Consider the following 348-residue polypeptide: D-alanine--D-alanine ligase (348 aa).

The 203-residue stretch at 132-334 (KRVLESIGIP…YPDLIEELVT (203 aa)) folds into the ATP-grasp domain. 162-217 (LARLTFPIFVKPANMGSSVGISKAQTKVELRKAIQLALTYDSRVLIEQGVIAREIE) provides a ligand contact to ATP. Mg(2+) is bound by residues D288, E301, and N303.

This sequence belongs to the D-alanine--D-alanine ligase family. It depends on Mg(2+) as a cofactor. Mn(2+) is required as a cofactor.

It localises to the cytoplasm. The catalysed reaction is 2 D-alanine + ATP = D-alanyl-D-alanine + ADP + phosphate + H(+). The protein operates within cell wall biogenesis; peptidoglycan biosynthesis. In terms of biological role, cell wall formation. This chain is D-alanine--D-alanine ligase, found in Streptococcus pyogenes serotype M4 (strain MGAS10750).